We begin with the raw amino-acid sequence, 100 residues long: Integration host factor subunit alpha (100 aa).

The tract at residues 54–73 (DLRDKRQRPGRNPKTGEEIP) is disordered.

It belongs to the bacterial histone-like protein family. As to quaternary structure, heterodimer of an alpha and a beta chain.

In terms of biological role, this protein is one of the two subunits of integration host factor, a specific DNA-binding protein that functions in genetic recombination as well as in transcriptional and translational control. The protein is Integration host factor subunit alpha of Pseudomonas aeruginosa (strain UCBPP-PA14).